The sequence spans 542 residues: Chaperonin GroEL 1 (542 aa).

ATP-binding positions include 29–32, 86–90, Gly-415, 479–481, and Asp-495; these read TIGP, DGTTT, and NAA.

This sequence belongs to the chaperonin (HSP60) family. Forms a cylinder of 14 subunits composed of two heptameric rings stacked back-to-back. Interacts with the co-chaperonin GroES.

The protein resides in the cytoplasm. The enzyme catalyses ATP + H2O + a folded polypeptide = ADP + phosphate + an unfolded polypeptide.. Its function is as follows. Together with its co-chaperonin GroES, plays an essential role in assisting protein folding. The GroEL-GroES system forms a nano-cage that allows encapsulation of the non-native substrate proteins and provides a physical environment optimized to promote and accelerate protein folding. The protein is Chaperonin GroEL 1 of Streptomyces avermitilis (strain ATCC 31267 / DSM 46492 / JCM 5070 / NBRC 14893 / NCIMB 12804 / NRRL 8165 / MA-4680).